A 420-amino-acid chain; its full sequence is MTTIIAFIFVFGLIVFFHELGHFLFAKRAGIMVKDFSIGFGPKIFAYRKKETQYTIRLLPIGGYVRMAGEDGEEIELKPGYRVGLELTPEETVSKIIVNGKDQYVNAQPIEVSLCDLEKELFIEGYEDYDDTKKVRYQVERDALVIDGKIETMITPYDRSFNAKSLGNRAMTIFAGPLFNFILAILIFTALAFVQGGVPSTDNTLGNVLPDGAAAEAGLKKGDEVLSINGKETKSWTDIVQNVSENPGKTLDFKIERDGKTQDIDVKPATQKENGKDVGKIGVETPMDSSFTAKITNGFTQTWNWIVQIFTILGNMFTGGFSLDMLNGPVGIYTSTQQVVQYGFMTVLNWTAVLSINLGIVNLLPLPALDGGRLMFFLYELVRGKPIDPKKEGIIHFAGFALLMVLMILVTWNDIQRAFF.

A Zn(2+)-binding site is contributed by H18. The active site involves E19. H22 lines the Zn(2+) pocket. A run of 4 helical transmembrane segments spans residues 172-194, 304-326, 347-369, and 393-412; these read TIFA…LAFV, NWIV…LDML, VLNW…LPAL, and GIIH…LVTW. The PDZ domain occupies 176–267; that stretch reads GPLFNFILAI…DGKTQDIDVK (92 aa).

The protein belongs to the peptidase M50B family. Requires Zn(2+) as cofactor.

The protein resides in the cell membrane. This Listeria monocytogenes serovar 1/2a (strain ATCC BAA-679 / EGD-e) protein is Putative zinc metalloprotease Lmo1318.